Reading from the N-terminus, the 273-residue chain is uncharacterized protein (273 aa).

The next 2 helical transmembrane spans lie at 24–44 (VGVS…VTIL) and 103–123 (IVGP…EAWA). The tract at residues 132–194 (SDLPHHGRQS…QPPAQTQPYR (63 aa)) is disordered. Over residues 164 to 179 (SSHHIRSPAVARHHKT) the composition is skewed to basic residues. Positions 183–192 (TTQPPAQTQP) are enriched in low complexity.

The protein resides in the cell membrane. This is an uncharacterized protein from Sinorhizobium fredii (strain NBRC 101917 / NGR234).